Reading from the N-terminus, the 603-residue chain is DNA-directed RNA polymerase subunit beta' N-terminal section (603 aa).

Positions 283, 285, 329, and 332 each coordinate Zn(2+).

Belongs to the RNA polymerase beta' chain family. RpoC1 subfamily. In plastids the minimal PEP RNA polymerase catalytic core is composed of four subunits: alpha, beta, beta', and beta''. When a (nuclear-encoded) sigma factor is associated with the core the holoenzyme is formed, which can initiate transcription. It depends on Zn(2+) as a cofactor.

Its subcellular location is the plastid. The protein localises to the chloroplast. It catalyses the reaction RNA(n) + a ribonucleoside 5'-triphosphate = RNA(n+1) + diphosphate. DNA-dependent RNA polymerase catalyzes the transcription of DNA into RNA using the four ribonucleoside triphosphates as substrates. This Chlamydomonas reinhardtii (Chlamydomonas smithii) protein is DNA-directed RNA polymerase subunit beta' N-terminal section (rpoC1A).